Here is a 198-residue protein sequence, read N- to C-terminus: Pyridoxal 5'-phosphate synthase subunit PdxT (198 aa).

An L-glutamine-binding site is contributed by 50-52; sequence GES. Residue C82 is the Nucleophile of the active site. L-glutamine contacts are provided by residues R114 and 143-144; that span reads IR. Catalysis depends on charge relay system residues H179 and E181.

It belongs to the glutaminase PdxT/SNO family. In the presence of PdxS, forms a dodecamer of heterodimers. Only shows activity in the heterodimer.

The catalysed reaction is aldehydo-D-ribose 5-phosphate + D-glyceraldehyde 3-phosphate + L-glutamine = pyridoxal 5'-phosphate + L-glutamate + phosphate + 3 H2O + H(+). It carries out the reaction L-glutamine + H2O = L-glutamate + NH4(+). It functions in the pathway cofactor biosynthesis; pyridoxal 5'-phosphate biosynthesis. In terms of biological role, catalyzes the hydrolysis of glutamine to glutamate and ammonia as part of the biosynthesis of pyridoxal 5'-phosphate. The resulting ammonia molecule is channeled to the active site of PdxS. This is Pyridoxal 5'-phosphate synthase subunit PdxT from Metallosphaera sedula (strain ATCC 51363 / DSM 5348 / JCM 9185 / NBRC 15509 / TH2).